Reading from the N-terminus, the 513-residue chain is Sphingolipid C9-methyltransferase 1 (513 aa).

The next 2 helical transmembrane spans lie at 63–83 (FLVAALLGIPQWLSWKLGGGL) and 85–105 (TAIFLSIFTTIPVLAVIWTVM). Residues 228–229 (YT), 265–273 (LLDIGCGWG), 291–296 (TLARNQ), and 321–322 (YR) each bind S-adenosyl-L-methionine.

Belongs to the CFA/CMAS family.

It localises to the membrane. The catalysed reaction is a (4E,8E)-4-sphinga-4,8-dienine ceramide + S-adenosyl-L-methionine = a 9-methyl-(4E,8E)-sphinga-4,8-dienine ceramide + S-adenosyl-L-homocysteine + H(+). It participates in lipid metabolism; sphingolipid metabolism. In terms of biological role, catalyzes methylation of the sphingoid base component of glucosylceramides (GluCers) at the C9-position. Sphingolipid C9-methylation requires 4,8-desaturated ceramides as substrates. Glucosylceramides play important roles in the growth, differentiation and pathogenicity. The methyl group at the C9-position distinguishes fungal glucosylceramides from those of plants and animals, and may thus play a role in host-pathogen interactions enabling the host to recognize the fungal attack and initiate specific defense responses. However, C-9 methylation of GlcCers is not essential for the sensitivity of F.graminearum to plant defensins MsDef1 and RsAFP2. The polypeptide is Sphingolipid C9-methyltransferase 1 (Gibberella zeae (strain ATCC MYA-4620 / CBS 123657 / FGSC 9075 / NRRL 31084 / PH-1) (Wheat head blight fungus)).